A 461-amino-acid chain; its full sequence is E3 ubiquitin-protein ligase parkin (461 aa).

The Ubiquitin-like domain occupies Val30–Phe90. Residue Ser92 is modified to Phosphoserine. The segment at Ala145–Pro227 adopts an RING-type 0; atypical zinc-finger fold. Zn(2+) is bound by residues Cys151, Cys155, Cys167, and Cys170. Residue Thr176 is modified to Phosphothreonine. Zn(2+) is bound by residues Cys197, Cys202, Cys213, His216, Cys240, Cys243, Cys255, His259, Cys262, Cys265, Cys291, Cys295, Cys334, Cys339, Cys354, Cys356, Cys361, Cys364, His369, Cys373, Cys415, and Cys418. Residues Lys236–Gly461 are TRIAD supradomain. An RING-type 1 zinc finger spans residues Cys240–Cys295. 2 consecutive IBR-type zinc fingers follow at residues Glu315–Cys373 and Leu411–Arg452. Residues Cys415–Cys446 form an RING-type 2; atypical zinc finger. The active site involves Cys428. Positions 433, 438, 443, 446, 454, and 458 each coordinate Zn(2+).

This sequence belongs to the RBR family. Parkin subfamily. Forms an E3 ubiquitin ligase complex with E2 ubiquitin-conjugating enzymes. In terms of processing, auto-ubiquitinates in an E2-dependent manner leading to its own degradation. Post-translationally, phosphorylated. Activation requires phosphorylation at Ser-92 by Pink1 and binding to Pink1-phosphorylated polyubiquitin chains. Phosphorylation at Thr-176 by Pink1 is also important for mitochondrial localization.

The protein localises to the mitochondrion. Its subcellular location is the cytoplasm. It is found in the cytosol. The catalysed reaction is [E2 ubiquitin-conjugating enzyme]-S-ubiquitinyl-L-cysteine + [acceptor protein]-L-lysine = [E2 ubiquitin-conjugating enzyme]-L-cysteine + [acceptor protein]-N(6)-ubiquitinyl-L-lysine.. It participates in protein modification; protein ubiquitination. Its activity is regulated as follows. In the autoinhibited state the side chain of Phe-460 inserts into a hydrophobic groove in RING-0, occluding the ubiquitin acceptor site Cys-428, whereas the REP repressor element binds RING-1 and blocks its E2-binding site. Activation of park requires 2 steps: (1) phosphorylation at Ser-92 by Pink1 and (2) binding to phosphorylated ubiquitin, leading to unlock repression of the catalytic Cys-428 by the RING-0 region via an allosteric mechanism and converting park to its fully-active form. According to another report, phosphorylation at Ser-92 by Pink1 is not essential for activation and only binding to phosphorylated ubiquitin is essential to unlock repression. Its function is as follows. E3 ubiquitin-protein ligase which accepts ubiquitin from E2 ubiquitin-conjugating enzymes in the form of a thioester and then directly transfers the ubiquitin to targeted substrates, such as Marf, Opa1, Sep1, Tom20 and porin. Mediates monoubiquitination as well as 'Lys-6', 'Lys-11', 'Lys-48'-linked and 'Lys-63'-linked polyubiquitination of substrates, depending on the context. Protects against mitochondrial dysfunction during cellular stress, by acting downstream of Pink1, to coordinate mitochondrial quality control mechanisms that remove and replace dysfunctional mitochondrial components. Depending on the severity of mitochondrial damage and/or dysfunction, activity ranges from preventing apoptosis and stimulating mitochondrial biogenesis to regulating mitochondrial dynamics and eliminating severely damaged mitochondria via mitophagy. Appears to be particularly important in maintaining the physiology and function of cells with high energy demands that are undergoing stress or altered metabolic environment, including spermatids, muscle cells and neurons such as the dopaminergic (DA) neurons. Activation and recruitment onto the outer membrane of damaged/dysfunctional mitochondria (OMM) requires Pink1-mediated phosphorylation of both park and ubiquitin. In depolarized mitochondria, mediates the decision between mitophagy or preventing apoptosis by inducing either the poly- or monoubiquitination of porin/VDAC; polyubiquitination of porin promotes mitophagy, while monoubiquitination of porin decreases mitochondrial calcium influx which ultimately inhibits apoptosis. When cellular stress results in irreversible mitochondrial damage, promotes the autophagic degradation of dysfunctional depolarized mitochondria (mitophagy) by promoting the ubiquitination of mitochondrial proteins. Preferentially assembles 'Lys-6'-, 'Lys-11'- and 'Lys-63'-linked polyubiquitin chains following mitochondrial damage, leading to mitophagy. In developing tissues, inhibits JNK-mediated apoptosis by negatively regulating bsk transcription. The Pink1-park pathway also promotes fission and/or inhibits fusion of damaged mitochondria by mediating the ubiquitination and subsequent degradation of proteins involved in mitochondrial fusion/fission such as Marf and Opa1. This prevents the refusion of unhealthy mitochondria with the healthy mitochondrial network and/or initiates mitochondrial fragmentation facilitating their later engulfment by autophagosomes. Regulates motility of damaged mitochondria by phosphorylating Miro which likely promotes its park-dependent degradation by the proteasome; in motor neurons, this inhibits mitochondrial intracellular anterograde transport along the axons which probably increases the chance of the mitochondria being eliminated in the soma. The Pink1-park pathway is also involved in mitochondrial regeneration processes such as promoting mitochondrial biogenesis, activating localized mitochondrial repair, promoting selective turnover of mitochondrial proteins and initiating the mitochondrial import of endogenous proteins. Involved in mitochondrial biogenesis via the ubiquitination of transcriptional repressor Paris which leads to its subsequent proteasomal degradation and allows activation of the transcription factor srl. Promotes localized mitochondrial repair by activating the translation of specific nuclear-encoded mitochondrial RNAs (nc-mtRNAs) on the mitochondrial surface, including several key electron transport chain component nc-mtRNAs. In Pediculus humanus subsp. corporis (Body louse), this protein is E3 ubiquitin-protein ligase parkin.